Consider the following 75-residue polypeptide: Dermaseptin-SP3 (75 aa).

The signal sequence occupies residues 1 to 22 (MAFLKKSLFLVLFLGLVSLSMC). Residues 23-45 (EEEKRENEVEEEQEDDEQSELRR) constitute a propeptide that is removed on maturation. At P72 the chain carries Proline amide. Positions 74–75 (EQ) are excised as a propeptide.

It belongs to the frog skin active peptide (FSAP) family. Dermaseptin subfamily. In terms of tissue distribution, expressed by the skin glands.

The protein localises to the secreted. The protein resides in the target cell membrane. Its function is as follows. Antimicrobial peptide with activity against Gram-positive and Gram-negative bacteria and fungi. Has been tested against E.coli (MIC=47.50-128 uM), S.aureus (MIC=189.98-512 uM), K.pneumoniae (MIC&gt;189.98 uM) and C.albicans (MIC&gt;189.98 uM). Probably acts by disturbing membrane functions with its alpha-helical amphipathic structure. May penetrate bacterial membranes, but stay at the mammalian membrane surface. Shows a very weak hemolytic activity. The sequence is that of Dermaseptin-SP3 from Agalychnis spurrelli (Gliding leaf frog).